The primary structure comprises 557 residues: TGF-beta receptor type-2 (557 aa).

Positions 1–23 are cleaved as a signal peptide; it reads MPPRLRPLLLRVSLWVLVGSSSP. Over 24–155 the chain is Extracellular; the sequence is ALLHDRSKEN…KPEEKDEISK (132 aa). Disulfide bonds link Cys-41-Cys-74, Cys-44-Cys-61, Cys-51-Cys-57, Cys-67-Cys-91, Cys-111-Cys-126, and Cys-128-Cys-133. Residues Asn-62 and Asn-84 are each glycosylated (N-linked (GlcNAc...) asparagine). Residues 156–176 form a helical membrane-spanning segment; the sequence is VTIISLVPLLVISVAVIVIFY. Residues 177–557 are Cytoplasmic-facing; it reads AYRTHKKRKL…PEDGSVTTAK (381 aa). One can recognise a Protein kinase domain in the interval 234–537; sequence IELDIVVGKG…FSEFKHHDKL (304 aa). ATP contacts are provided by residues 240–248 and Lys-267; that span reads VGKGRFAEV. Residue Asp-369 is the Proton acceptor of the active site.

The protein belongs to the protein kinase superfamily. TKL Ser/Thr protein kinase family. TGFB receptor subfamily. As to quaternary structure, heterohexamer; TGFB1, TGFB2 and TGFB3 homodimeric ligands assemble a functional receptor composed of two TGFBR1 and TGFBR2 heterodimers to form a ligand-receptor heterohexamer. Mg(2+) is required as a cofactor. Mn(2+) serves as cofactor. Phosphorylated on a Ser/Thr residue in the cytoplasmic domain. Detected at low levels in embryonic heart, brain and lung. Detected at high levels in hatchling heart and lung.

The protein resides in the cell membrane. Its subcellular location is the membrane raft. It carries out the reaction L-threonyl-[receptor-protein] + ATP = O-phospho-L-threonyl-[receptor-protein] + ADP + H(+). It catalyses the reaction L-seryl-[receptor-protein] + ATP = O-phospho-L-seryl-[receptor-protein] + ADP + H(+). Its function is as follows. Transmembrane serine/threonine kinase forming with the TGF-beta type I serine/threonine kinase receptor, TGFBR1, the non-promiscuous receptor for the TGF-beta cytokines TGFB1, TGFB2 and TGFB3. Transduces the TGFB1, TGFB2 and TGFB3 signal from the cell surface to the cytoplasm and is thus regulating a plethora of physiological and pathological processes including cell cycle arrest in epithelial and hematopoietic cells, control of mesenchymal cell proliferation and differentiation, wound healing, extracellular matrix production, immunosuppression and carcinogenesis. The formation of the receptor complex composed of 2 TGFBR1 and 2 TGFBR2 molecules symmetrically bound to the cytokine dimer results in the phosphorylation and the activation of TGFRB1 by the constitutively active TGFBR2. Activated TGFBR1 phosphorylates SMAD2 which dissociates from the receptor and interacts with SMAD4. The SMAD2-SMAD4 complex is subsequently translocated to the nucleus where it modulates the transcription of the TGF-beta-regulated genes. This constitutes the canonical SMAD-dependent TGF-beta signaling cascade. Also involved in non-canonical, SMAD-independent TGF-beta signaling pathways. The polypeptide is TGF-beta receptor type-2 (TGFBR2) (Gallus gallus (Chicken)).